The primary structure comprises 735 residues: Ethylene receptor 1 (735 aa).

3 consecutive transmembrane segments (helical) span residues 23 to 43 (ISDF…IYFV), 54 to 74 (VLVQ…INLW), and 92 to 112 (VLTA…IPDL). 2 residues coordinate Cu cation: Cys65 and His69. Residues 158-307 (DRHTILKTTL…VVADQVAVAL (150 aa)) form the GAF domain. The region spanning 350-586 (VMNHEMRTPM…IFDVKLAISN (237 aa)) is the Histidine kinase domain. The residue at position 353 (His353) is a Phosphohistidine; by autocatalysis. The Response regulatory domain occupies 609–726 (KVLVMDENGV…NMRNVLSDRL (118 aa)). Asp657 carries the post-translational modification 4-aspartylphosphate. A Glycyl lysine isopeptide (Lys-Gly) (interchain with G-Cter in ubiquitin) cross-link involves residue Lys711.

The protein belongs to the ethylene receptor family. As to quaternary structure, homodimer; disulfide-linked. It depends on Cu cation as a cofactor. Post-translationally, activation probably requires a transfer of a phosphate group between a His in the transmitter domain and an Asp of the receiver domain.

It is found in the endoplasmic reticulum membrane. The enzyme catalyses ATP + protein L-histidine = ADP + protein N-phospho-L-histidine.. May act early in the ethylene signal transduction pathway, possibly as an ethylene receptor, or as a regulator of the pathway. This chain is Ethylene receptor 1 (ETR1), found in Brassica oleracea (Wild cabbage).